Reading from the N-terminus, the 265-residue chain is NAD kinase 1 (265 aa).

Residue Asp45 is the Proton acceptor of the active site. Residues 45-46 (DG), His50, 122-123 (NE), Arg148, Asp150, and Ala185 contribute to the NAD(+) site.

Belongs to the NAD kinase family. It depends on a divalent metal cation as a cofactor.

It is found in the cytoplasm. The enzyme catalyses NAD(+) + ATP = ADP + NADP(+) + H(+). Its function is as follows. Involved in the regulation of the intracellular balance of NAD and NADP, and is a key enzyme in the biosynthesis of NADP. Catalyzes specifically the phosphorylation on 2'-hydroxyl of the adenosine moiety of NAD to yield NADP. This Halalkalibacterium halodurans (strain ATCC BAA-125 / DSM 18197 / FERM 7344 / JCM 9153 / C-125) (Bacillus halodurans) protein is NAD kinase 1.